A 443-amino-acid chain; its full sequence is Type I restriction enzyme HindI methylase subunit (443 aa).

S-adenosyl-L-methionine is bound by residues 117 to 122 (QYFTPK), 146 to 148 (SGG), and Glu173.

The protein belongs to the N(4)/N(6)-methyltransferase family. As to quaternary structure, the type I restriction/modification system is composed of three polypeptides R, M and S; the restriction enzyme has stoichiometry R(2)M(2)S(1) while the methyltransferase is M(2)S(1).

It catalyses the reaction a 2'-deoxyadenosine in DNA + S-adenosyl-L-methionine = an N(6)-methyl-2'-deoxyadenosine in DNA + S-adenosyl-L-homocysteine + H(+). Its function is as follows. The subtype gamma methyltransferase (M) subunit of a type I restriction enzyme. The M and S subunits together form a methyltransferase (MTase) that methylates adenosines in the sequence 5'-RAACN(5)TAG-3'. Methylation protects against cleavage by HindI. In the presence of the R subunit the complex can also act as an endonuclease, binding to the same target sequence but cutting the DNA some distance from this site. Whether the DNA is cut or modified depends on the methylation state of the target sequence. When the target site is unmodified, the DNA is cut. When the target site is hemimethylated, the complex acts as a maintenance MTase modifying the DNA so that both strands become methylated. After locating a non-methylated recognition site, the enzyme complex serves as a molecular motor that translocates DNA in an ATP-dependent manner until a collision occurs that triggers cleavage. The sequence is that of Type I restriction enzyme HindI methylase subunit from Haemophilus influenzae (strain ATCC 51907 / DSM 11121 / KW20 / Rd).